The primary structure comprises 199 residues: Holliday junction branch migration complex subunit RuvA (199 aa).

Residues 1-64 (MIALLTGKLA…EDAINLYGFR (64 aa)) form a domain I region. Residues 65 to 143 (TQQEKELFQL…KLGLAQPQAG (79 aa)) are domain II. The interval 144–148 (GTTAP) is flexible linker. Residues 149–199 (AKQEIRDDVLSALINLGYKEAVVQKALAELKVTEDATVELVLKQALKILMK) form a domain III region.

This sequence belongs to the RuvA family. As to quaternary structure, homotetramer. Forms an RuvA(8)-RuvB(12)-Holliday junction (HJ) complex. HJ DNA is sandwiched between 2 RuvA tetramers; dsDNA enters through RuvA and exits via RuvB. An RuvB hexamer assembles on each DNA strand where it exits the tetramer. Each RuvB hexamer is contacted by two RuvA subunits (via domain III) on 2 adjacent RuvB subunits; this complex drives branch migration. In the full resolvosome a probable DNA-RuvA(4)-RuvB(12)-RuvC(2) complex forms which resolves the HJ.

The protein localises to the cytoplasm. Functionally, the RuvA-RuvB-RuvC complex processes Holliday junction (HJ) DNA during genetic recombination and DNA repair, while the RuvA-RuvB complex plays an important role in the rescue of blocked DNA replication forks via replication fork reversal (RFR). RuvA specifically binds to HJ cruciform DNA, conferring on it an open structure. The RuvB hexamer acts as an ATP-dependent pump, pulling dsDNA into and through the RuvAB complex. HJ branch migration allows RuvC to scan DNA until it finds its consensus sequence, where it cleaves and resolves the cruciform DNA. In Citrifermentans bemidjiense (strain ATCC BAA-1014 / DSM 16622 / JCM 12645 / Bem) (Geobacter bemidjiensis), this protein is Holliday junction branch migration complex subunit RuvA.